Here is an 877-residue protein sequence, read N- to C-terminus: Ewing's tumor-associated antigen 1 homolog (877 aa).

Residues 1–82 (MQLKDGGTGM…GRSPRGKETP (82 aa)) are disordered. A compositionally biased stretch (basic residues) spans 56–65 (AGTRSARRAQ). Residue lysine 87 forms a Glycyl lysine isopeptide (Lys-Gly) (interchain with G-Cter in SUMO2) linkage. The ATR-activation domain (AAD) motif lies at 107-113 (IFWDQNS). Coiled coils occupy residues 185-213 (KTKN…IQEQ) and 306-335 (AFLN…LLTE). Glycyl lysine isopeptide (Lys-Gly) (interchain with G-Cter in SUMO2) cross-links involve residues lysine 416 and lysine 444. Residues 450–479 (PSKTRNGELRNAGEHRFSSHPGDESRKVPF) form a disordered region. Residues 454–476 (RNGELRNAGEHRFSSHPGDESRK) are compositionally biased toward basic and acidic residues. Serine 467 carries the post-translational modification Phosphoserine. Lysine 510 participates in a covalent cross-link: Glycyl lysine isopeptide (Lys-Gly) (interchain with G-Cter in SUMO2). The RBM1 motif motif lies at 607–622 (GEVDDDLFCQACDDIE). Disordered stretches follow at residues 626 to 664 (QQEN…PSKH) and 818 to 877 (ANQQ…ISLP). A compositionally biased stretch (low complexity) spans 637–662 (SVSYTSTRGSRSSSTASKQASQSAPS). Over residues 818–833 (ANQQQSSINYSESLKP) the composition is skewed to polar residues. Positions 840–859 (ERNRKYSPEEIQRKRQEALV) are enriched in basic and acidic residues. Positions 843–865 (RKYSPEEIQRKRQEALVRRKAKA) match the RBM2 motif motif. Residues 868-877 (TVQSAPISLP) are compositionally biased toward polar residues.

In terms of assembly, interacts (via RBM1 motif) with RPA1. Interacts (via RBM2 motif) with RPA2. Interacts (via the ATR-activation domain motif) with ATR. In terms of processing, phosphorylated by ATR.

The protein resides in the nucleus. Functionally, replication stress response protein that accumulates at DNA damage sites and promotes replication fork progression and integrity. Recruited to stalled replication forks via interaction with the RPA complex and directly stimulates ATR kinase activity independently of TOPBP1. Probably only regulates a subset of ATR targets. This Mus musculus (Mouse) protein is Ewing's tumor-associated antigen 1 homolog.